The following is a 77-amino-acid chain: Acyl carrier protein (77 aa).

Residues 2–77 enclose the Carrier domain; it reads ADTLSRITKI…DVVEYIEGRQ (76 aa). Ser-37 carries the O-(pantetheine 4'-phosphoryl)serine modification.

The protein belongs to the acyl carrier protein (ACP) family. Post-translationally, 4'-phosphopantetheine is transferred from CoA to a specific serine of apo-ACP by AcpS. This modification is essential for activity because fatty acids are bound in thioester linkage to the sulfhydryl of the prosthetic group.

It is found in the cytoplasm. It functions in the pathway lipid metabolism; fatty acid biosynthesis. Carrier of the growing fatty acid chain in fatty acid biosynthesis. The polypeptide is Acyl carrier protein (Halalkalibacterium halodurans (strain ATCC BAA-125 / DSM 18197 / FERM 7344 / JCM 9153 / C-125) (Bacillus halodurans)).